The chain runs to 823 residues: ATP-dependent DNA helicase At3g02060, chloroplastic (823 aa).

A chloroplast-targeting transit peptide spans 1–53 (MMSLLPNPDPITVPLVLKLCSFPPPRRLFSLRLRRFTRKSSSLLPLVAVSSLS). Residues 285-447 (LTERETPMDR…LTGFRDASLI (163 aa)) form the Helicase ATP-binding domain. 298–305 (GDVGFGKT) is a binding site for ATP. Residues 400–403 (DEEQ) carry the DEEQ box motif. Residues 465–622 (RKEKVIEAIK…GFQLAEKDMG (158 aa)) enclose the Helicase C-terminal domain.

This sequence belongs to the helicase family.

Its subcellular location is the plastid. The protein localises to the chloroplast. It carries out the reaction ATP + H2O = ADP + phosphate + H(+). In Arabidopsis thaliana (Mouse-ear cress), this protein is ATP-dependent DNA helicase At3g02060, chloroplastic.